Consider the following 139-residue polypeptide: MLPAAMKSLGLALLALLLCPSPAHGLWCQDCTLANSSHCAPKQCQPTDTVCASVRITDPSSSRKDHSVNKMCASSCDFVKRHFFSDYLMGFINSGILKVDVDCCEKDLCNGASVAGRSPWALAGGLLLSLGPALLWAGP.

The signal sequence occupies residues 1 to 25; it reads MLPAAMKSLGLALLALLLCPSPAHG. Residues 26 to 113 form the UPAR/Ly6 domain; it reads LWCQDCTLAN…CEKDLCNGAS (88 aa). Intrachain disulfides connect Cys-28-Cys-51, Cys-31-Cys-39, Cys-44-Cys-72, Cys-76-Cys-103, and Cys-104-Cys-109. Residue Asn-35 is glycosylated (N-linked (GlcNAc...) asparagine). Asn-110 carries the GPI-anchor amidated asparagine lipid modification. Residues 111–139 constitute a propeptide, removed in mature form; it reads GASVAGRSPWALAGGLLLSLGPALLWAGP.

In terms of assembly, interacts with CHRNA4 and CHRNA7. As to expression, strongly expressed in brain, also found in lower levels in eye and reproductive tissues.

The protein resides in the cell membrane. Believed to act as modulator of nicotinic acetylcholine receptors (nAChRs) activity. In vitro inhibits alpha-3:beta-4-containing nAChRs maximum response. In vitro inhibits alpha-3:beta-4-containing nAChRs maximum response. May play a role in the intracellular trafficking of alpha-7-containing nAChRs and may inhibit their expression at the cell surface. Seems to inhibit alpha-7/CHRNA7 signaling in hippocampal neurons. In Mus musculus (Mouse), this protein is Lymphocyte antigen 6H (Ly6h).